Here is a 142-residue protein sequence, read N- to C-terminus: HTH-type transcriptional repressor NsrR (142 aa).

Residues 2–129 (QLTSFTDYGL…DRHTLAELVE (128 aa)) enclose the HTH rrf2-type domain. Positions 28–51 (ITEVTQVYGVSRNHMVKIINQLSH) form a DNA-binding region, H-T-H motif. Positions 91, 96, and 102 each coordinate [2Fe-2S] cluster.

The cofactor is [2Fe-2S] cluster.

In terms of biological role, nitric oxide-sensitive repressor of genes involved in protecting the cell against nitrosative stress. May require iron for activity. The polypeptide is HTH-type transcriptional repressor NsrR (Proteus mirabilis (strain HI4320)).